The sequence spans 344 residues: Acyl-CoA ligase clz12 (344 aa).

2 AMP-binding regions span residues valine 2–valine 239 and glutamate 248–lysine 322.

Belongs to the ATP-dependent AMP-binding enzyme family.

The protein operates within secondary metabolite biosynthesis. Acyl-CoA ligase; part of the gene cluster that mediates the biosynthesis of squalestatin S1 (SQS1, also known as zaragozic acid A), a heavily oxidized fungal polyketide that offers potent cholesterol lowering activity by targeting squalene synthase (SS). SQS1 is composed of a 2,8-dioxobicyclic[3.2.1]octane-3,4,5-tricarboxyclic acid core that is connected to two lipophilic polyketide arms. These initial steps feature the priming of an unusual benzoic acid starter unit onto the highly reducing polyketide synthase clz14, followed by oxaloacetate extension and product release to generate a tricarboxylic acid containing product. The phenylalanine ammonia lyase (PAL) clz10 and the acyl-CoA ligase clz12 are involved in transforming phenylalanine into benzoyl-CoA. The citrate synthase-like protein clz17 is involved in connecting the C-alpha-carbons of the hexaketide chain and oxaloacetate to afford the tricarboxylic acid unit. The potential hydrolytic enzymes, clz11 and clz13, are in close proximity to pks2 and may participate in product release. On the other side, the tetraketide arm is synthesized by a the squalestatin tetraketide synthase clz2 and enzymatically esterified to the core in the last biosynthetic step, by the acetyltransferase clz6. The biosynthesis of the tetraketide must involve 3 rounds of chain extension. After the first and second rounds methyl-transfer occurs, and in all rounds of extension the ketoreductase and dehydratase are active. The enoyl reductase and C-MeT of clz2 are not active in the final round of extension. The acetyltransferase clz6 appears to have a broad substrate selectivity for its acyl CoA substrate, allowing the in vitro synthesis of novel squalestatins. The biosynthesis of SQS1 requires several oxidative steps likely performed by oxidoreductases clz3, clz15 and clz16. Finally, in support of the identification of the cluster as being responsible for SQS1 production, the cluster contains a gene encoding a putative squalene synthase (SS) clz20, suggesting a likely mechanism for self-resistance. The polypeptide is Acyl-CoA ligase clz12 (Cochliobolus lunatus (Filamentous fungus)).